The sequence spans 688 residues: DNA ligase (688 aa).

NAD(+)-binding positions include 38–42, 87–88, and Glu-118; these read DEEYD and SL. The active-site N6-AMP-lysine intermediate is Lys-120. Residues Arg-141, Glu-175, Lys-291, and Lys-315 each contribute to the NAD(+) site. Zn(2+) is bound by residues Cys-409, Cys-412, Cys-428, and Cys-433. Residues 590–679 form the BRCT domain; sequence VKLDILRGLT…AELKGYNFDE (90 aa).

It belongs to the NAD-dependent DNA ligase family. LigA subfamily. Mg(2+) serves as cofactor. Mn(2+) is required as a cofactor.

The enzyme catalyses NAD(+) + (deoxyribonucleotide)n-3'-hydroxyl + 5'-phospho-(deoxyribonucleotide)m = (deoxyribonucleotide)n+m + AMP + beta-nicotinamide D-nucleotide.. In terms of biological role, DNA ligase that catalyzes the formation of phosphodiester linkages between 5'-phosphoryl and 3'-hydroxyl groups in double-stranded DNA using NAD as a coenzyme and as the energy source for the reaction. It is essential for DNA replication and repair of damaged DNA. This is DNA ligase from Thermotoga maritima (strain ATCC 43589 / DSM 3109 / JCM 10099 / NBRC 100826 / MSB8).